Reading from the N-terminus, the 239-residue chain is Protein-S-isoprenylcysteine O-methyltransferase (239 aa).

Residues 1–23 are Cytoplasmic-facing; sequence MHQDFQEDEHEYPDIRRNPLHEV. Residues 24 to 44 form a helical membrane-spanning segment; that stretch reads TMTSYILGILLGIFVGLFPQI. Over 45–47 the chain is Lumenal; that stretch reads RFK. A helical transmembrane segment spans residues 48-68; sequence NFNLFIIALSLFHFLEYYITA. Over 69-88 the chain is Cytoplasmic; sequence KYNPLKVHSESFLLNNGKSY. A helical transmembrane segment spans residues 89–109; that stretch reads MAAHSFAILECLVESFLFPDL. A topological domain (lumenal) is located at residue Lys110. Residues 111-131 traverse the membrane as a helical segment; that stretch reads IFSYSLATKLCTVLGCLLVIL. Residues 132–175 are Cytoplasmic-facing; sequence GQYTRTIAMHTAGHSFSHIVKTKKESDHVLVKTGVYSWSRHPSY. S-adenosyl-L-methionine is bound by residues 159–162, Tyr167, and 172–175; these read HVLV and HPSY. Positions 176-206 form an intramembrane region, helical; sequence LGFFWWAIGTQLLLLNPLSLVIFIFVLWKFF. At 207 to 239 the chain is on the cytoplasmic side; sequence SDRIRVEEKYLIEFFSAEYIEYKNKVGVGIPFI. Arg209 lines the substrate pocket. Glu213 contacts S-adenosyl-L-methionine.

Belongs to the class VI-like SAM-binding methyltransferase superfamily. Isoprenylcysteine carboxyl methyltransferase family.

The protein localises to the endoplasmic reticulum membrane. It carries out the reaction [protein]-C-terminal S-[(2E,6E)-farnesyl]-L-cysteine + S-adenosyl-L-methionine = [protein]-C-terminal S-[(2E,6E)-farnesyl]-L-cysteine methyl ester + S-adenosyl-L-homocysteine. Its function is as follows. Mediates C-terminal methylation of the isoprenylated C-terminal cysteine in A-factor mating pheromone and Ras proteins. Does not have a preference for the farnesyl or geranylgeranyl moieties in the model substrates N-acetyl-S-farnesyl-L-cysteine (AFC) and N-acetyl-S-geranylgeranyl-L-cysteine (AGGC) in vitro. The protein is Protein-S-isoprenylcysteine O-methyltransferase (STE14) of Saccharomyces cerevisiae (strain ATCC 204508 / S288c) (Baker's yeast).